The sequence spans 359 residues: Popy class I histocompatibility antigen, alpha chain E (359 aa).

Residues 1–18 form the signal peptide; the sequence is GTLLLLLSEALALTETWA. Residues 19–108 are alpha-1; it reads GSHSLKYFHT…LRGYYNQTEA (90 aa). At 19–302 the chain is on the extracellular side; that stretch reads GSHSLKYFHT…EPASQTTIPI (284 aa). Asn104 is a glycosylation site (N-linked (GlcNAc...) asparagine). Positions 109-200 are alpha-2; sequence GSHTLQWMHG…EKGKETLLHL (92 aa). 2 disulfide bridges follow: Cys119-Cys182 and Cys221-Cys277. An alpha-3 region spans residues 201 to 292; that stretch reads DPPKTHVTHH…GLPEPLTLRW (92 aa). In terms of domain architecture, Ig-like C1-type spans 203 to 291; that stretch reads PKTHVTHHRI…EGLPEPLTLR (89 aa). The connecting peptide stretch occupies residues 293 to 302; sequence EPASQTTIPI. A helical membrane pass occupies residues 303 to 326; that stretch reads VGIFAGLVLLGAVVTGATVVAAVM. Residues 327–359 are Cytoplasmic-facing; that stretch reads WRKKSSGGKGGSYSKAEWSDSAQGSESLTACKA. The tract at residues 330-359 is disordered; that stretch reads KSSGGKGGSYSKAEWSDSAQGSESLTACKA. The span at 346–359 shows a compositional bias: polar residues; sequence DSAQGSESLTACKA. The residue at position 351 (Ser351) is a Phosphoserine.

The protein belongs to the MHC class I family. Heterodimer of an alpha chain and a beta chain (beta-2-microglobulin).

Its subcellular location is the membrane. Involved in the presentation of foreign antigens to the immune system. The polypeptide is Popy class I histocompatibility antigen, alpha chain E (Popy-E) (Pongo pygmaeus (Bornean orangutan)).